A 398-amino-acid polypeptide reads, in one-letter code: NADH-quinone oxidoreductase subunit D (398 aa).

The protein belongs to the complex I 49 kDa subunit family. In terms of assembly, NDH-1 is composed of 14 different subunits. Subunits NuoB, C, D, E, F, and G constitute the peripheral sector of the complex.

Its subcellular location is the cell inner membrane. The enzyme catalyses a quinone + NADH + 5 H(+)(in) = a quinol + NAD(+) + 4 H(+)(out). In terms of biological role, NDH-1 shuttles electrons from NADH, via FMN and iron-sulfur (Fe-S) centers, to quinones in the respiratory chain. The immediate electron acceptor for the enzyme in this species is believed to be ubiquinone. Couples the redox reaction to proton translocation (for every two electrons transferred, four hydrogen ions are translocated across the cytoplasmic membrane), and thus conserves the redox energy in a proton gradient. The protein is NADH-quinone oxidoreductase subunit D of Bradyrhizobium sp. (strain BTAi1 / ATCC BAA-1182).